The primary structure comprises 168 residues: Urease accessory protein UreE (168 aa).

Residues 137 to 168 (PESGAYHGTTGHGGGHSHSHGHSHDHHHDHSH) are disordered. Basic residues predominate over residues 151–161 (GHSHSHGHSHD).

It belongs to the UreE family.

The protein localises to the cytoplasm. Its function is as follows. Involved in urease metallocenter assembly. Binds nickel. Probably functions as a nickel donor during metallocenter assembly. This is Urease accessory protein UreE from Saccharophagus degradans (strain 2-40 / ATCC 43961 / DSM 17024).